The following is a 64-amino-acid chain: Cytochrome c oxidase subunit 2 (64 aa).

Over 1–14 the chain is Mitochondrial intermembrane; it reads MAHPSQLGFQDAAS. Residues 15-45 traverse the membrane as a helical segment; the sequence is PVMEELXHFHDHTLMIVFLISTLVXYIIVAM. The Mitochondrial matrix portion of the chain corresponds to 46-64; sequence VSTKLTNKYVLDSQEIEIV.

It belongs to the cytochrome c oxidase subunit 2 family. In terms of assembly, component of the cytochrome c oxidase (complex IV, CIV), a multisubunit enzyme composed of 14 subunits. The complex is composed of a catalytic core of 3 subunits MT-CO1, MT-CO2 and MT-CO3, encoded in the mitochondrial DNA, and 11 supernumerary subunits COX4I, COX5A, COX5B, COX6A, COX6B, COX6C, COX7A, COX7B, COX7C, COX8 and NDUFA4, which are encoded in the nuclear genome. The complex exists as a monomer or a dimer and forms supercomplexes (SCs) in the inner mitochondrial membrane with NADH-ubiquinone oxidoreductase (complex I, CI) and ubiquinol-cytochrome c oxidoreductase (cytochrome b-c1 complex, complex III, CIII), resulting in different assemblies (supercomplex SCI(1)III(2)IV(1) and megacomplex MCI(2)III(2)IV(2)). Found in a complex with TMEM177, COA6, COX18, COX20, SCO1 and SCO2. Interacts with TMEM177 in a COX20-dependent manner. Interacts with COX20. Interacts with COX16. Cu cation serves as cofactor.

Its subcellular location is the mitochondrion inner membrane. The catalysed reaction is 4 Fe(II)-[cytochrome c] + O2 + 8 H(+)(in) = 4 Fe(III)-[cytochrome c] + 2 H2O + 4 H(+)(out). Component of the cytochrome c oxidase, the last enzyme in the mitochondrial electron transport chain which drives oxidative phosphorylation. The respiratory chain contains 3 multisubunit complexes succinate dehydrogenase (complex II, CII), ubiquinol-cytochrome c oxidoreductase (cytochrome b-c1 complex, complex III, CIII) and cytochrome c oxidase (complex IV, CIV), that cooperate to transfer electrons derived from NADH and succinate to molecular oxygen, creating an electrochemical gradient over the inner membrane that drives transmembrane transport and the ATP synthase. Cytochrome c oxidase is the component of the respiratory chain that catalyzes the reduction of oxygen to water. Electrons originating from reduced cytochrome c in the intermembrane space (IMS) are transferred via the dinuclear copper A center (CU(A)) of subunit 2 and heme A of subunit 1 to the active site in subunit 1, a binuclear center (BNC) formed by heme A3 and copper B (CU(B)). The BNC reduces molecular oxygen to 2 water molecules using 4 electrons from cytochrome c in the IMS and 4 protons from the mitochondrial matrix. The chain is Cytochrome c oxidase subunit 2 (mt-co2) from Scaphirhynchus platorynchus (Shovelnose sturgeon).